A 143-amino-acid polypeptide reads, in one-letter code: Large ribosomal subunit protein uL13 (143 aa).

The protein belongs to the universal ribosomal protein uL13 family. Part of the 50S ribosomal subunit.

This protein is one of the early assembly proteins of the 50S ribosomal subunit, although it is not seen to bind rRNA by itself. It is important during the early stages of 50S assembly. This is Large ribosomal subunit protein uL13 from Natranaerobius thermophilus (strain ATCC BAA-1301 / DSM 18059 / JW/NM-WN-LF).